The chain runs to 89 residues: Small ribosomal subunit protein uS15 (89 aa).

Residues 1–13 are compositionally biased toward basic and acidic residues; that stretch reads MYLTSEKKEEIFS. Residues 1 to 24 are disordered; it reads MYLTSEKKEEIFSKHGKGKNDTGS.

Belongs to the universal ribosomal protein uS15 family. In terms of assembly, part of the 30S ribosomal subunit. Forms a bridge to the 50S subunit in the 70S ribosome, contacting the 23S rRNA.

Functionally, one of the primary rRNA binding proteins, it binds directly to 16S rRNA where it helps nucleate assembly of the platform of the 30S subunit by binding and bridging several RNA helices of the 16S rRNA. In terms of biological role, forms an intersubunit bridge (bridge B4) with the 23S rRNA of the 50S subunit in the ribosome. This chain is Small ribosomal subunit protein uS15, found in Christiangramia forsetii (strain DSM 17595 / CGMCC 1.15422 / KT0803) (Gramella forsetii).